The following is a 298-amino-acid chain: Ribosomal protein L11 methyltransferase (298 aa).

Residues threonine 152, glycine 176, aspartate 198, and asparagine 236 each contribute to the S-adenosyl-L-methionine site.

This sequence belongs to the methyltransferase superfamily. PrmA family.

It is found in the cytoplasm. It carries out the reaction L-lysyl-[protein] + 3 S-adenosyl-L-methionine = N(6),N(6),N(6)-trimethyl-L-lysyl-[protein] + 3 S-adenosyl-L-homocysteine + 3 H(+). In terms of biological role, methylates ribosomal protein L11. This is Ribosomal protein L11 methyltransferase from Polaromonas sp. (strain JS666 / ATCC BAA-500).